Here is a 436-residue protein sequence, read N- to C-terminus: Serine--tRNA ligase (436 aa).

An L-serine-binding site is contributed by 241–243 (TSE). 272-274 (RAE) serves as a coordination point for ATP. Glu-295 contributes to the L-serine binding site. Residue 359–362 (EISS) participates in ATP binding. Residue Ser-395 participates in L-serine binding.

This sequence belongs to the class-II aminoacyl-tRNA synthetase family. Type-1 seryl-tRNA synthetase subfamily. In terms of assembly, homodimer. The tRNA molecule binds across the dimer.

The protein resides in the cytoplasm. The enzyme catalyses tRNA(Ser) + L-serine + ATP = L-seryl-tRNA(Ser) + AMP + diphosphate + H(+). It carries out the reaction tRNA(Sec) + L-serine + ATP = L-seryl-tRNA(Sec) + AMP + diphosphate + H(+). The protein operates within aminoacyl-tRNA biosynthesis; selenocysteinyl-tRNA(Sec) biosynthesis; L-seryl-tRNA(Sec) from L-serine and tRNA(Sec): step 1/1. Catalyzes the attachment of serine to tRNA(Ser). Is also able to aminoacylate tRNA(Sec) with serine, to form the misacylated tRNA L-seryl-tRNA(Sec), which will be further converted into selenocysteinyl-tRNA(Sec). In Beijerinckia indica subsp. indica (strain ATCC 9039 / DSM 1715 / NCIMB 8712), this protein is Serine--tRNA ligase.